Here is a 276-residue protein sequence, read N- to C-terminus: 2,3,4,5-tetrahydropyridine-2,6-dicarboxylate N-succinyltransferase (276 aa).

Residues Arg104 and Asp141 each contribute to the substrate site.

Belongs to the transferase hexapeptide repeat family. Homotrimer.

The protein localises to the cytoplasm. It catalyses the reaction (S)-2,3,4,5-tetrahydrodipicolinate + succinyl-CoA + H2O = (S)-2-succinylamino-6-oxoheptanedioate + CoA. The protein operates within amino-acid biosynthesis; L-lysine biosynthesis via DAP pathway; LL-2,6-diaminopimelate from (S)-tetrahydrodipicolinate (succinylase route): step 1/3. This Legionella pneumophila (strain Corby) protein is 2,3,4,5-tetrahydropyridine-2,6-dicarboxylate N-succinyltransferase.